The following is a 527-amino-acid chain: Arginine--tRNA ligase (527 aa).

Positions 111–121 (ANPTGPLHIGH) match the 'HIGH' region motif.

The protein belongs to the class-I aminoacyl-tRNA synthetase family. In terms of assembly, monomer.

The protein localises to the cytoplasm. It catalyses the reaction tRNA(Arg) + L-arginine + ATP = L-arginyl-tRNA(Arg) + AMP + diphosphate. The chain is Arginine--tRNA ligase from Campylobacter concisus (strain 13826).